A 757-amino-acid polypeptide reads, in one-letter code: MMKRRWSNNGGFAALKMLEESSSEVTSSSNGLVLSSDINMSPSSLDSPVYGDQEMWLCNDSASYNNSHQHSVITSLQGCTSSLPAQTTIIPLSALPNSNNASLNNQNQNYQNGNSMNTNLSVNTNNSVGGGGGGGGVPGMTSLNGLGGGGGSQVNNHNHSHNHLHHNSNSNHSNSSSHHTNGHMGIGGGGGGLSVNINGPNIVSNAQQLNSLQASQNGQVIHANIGIHSIISNGLNHHHHHHMNNSSMMHHTPRSESANSISSGRDDLSPSSSLNGFSTSDASDVKKIKKGPAPRLQEELCLVCGDRASGYHYNALTCEGCKGFFRRSVTKNAVYCCKFGHACEMDMYMRRKCQECRLKKCLAVGMRPECVVPENQCAMKRREKKAQKEKDKIQTSVCATEIKKEILDLMTCEPPSHPTCPLLPEDILAKCQARNIPPLSYNQLAVIYKLIWYQDGYEQPSEEDLKRIMSSPDENESQHDASFRHITEITILTVQLIVEFAKGLPAFTKIPQEDQITLLKACSSEVMMLRMARRYDHNSDSIFFANNRSYTRDSYKMAGMADNIEDLLHFCRQMYSMKVDNVEYALLTAIVIFSDRPGLEEAELVEAIQSYYIDTLRIYILNRHCGDPMSLVFFAKLLSILTELRTLGNQNAEMCFSLKLKNRKLPKFLEEIWDVHAIPPSVQSHIQATQAEKAAQEAQATTSAISAAATSSSSINTSMATSSSSSLSPSAASTPNGGAVDYVGTDMSMSLVQSDNA.

Positions 1–300 (MMKRRWSNNG…GPAPRLQEEL (300 aa)) are modulating. Disordered stretches follow at residues 126 to 192 (NSVG…GGGG) and 235 to 289 (LNHH…KKIK). Residues 128 to 138 (VGGGGGGGGVP) are compositionally biased toward gly residues. Residues 167–183 (NSNSNHSNSSSHHTNGH) are compositionally biased toward low complexity. 2 NR C4-type zinc fingers span residues 301–321 (CLVCGDRASGYHYNALTCEGC) and 337–361 (CKFGHACEMDMYMRRKCQECRLKKC). Positions 301–373 (CLVCGDRASG…VGMRPECVVP (73 aa)) form a DNA-binding region, nuclear receptor. Positions 442 to 677 (NQLAVIYKLI…FLEEIWDVHA (236 aa)) constitute an NR LBD domain. The span at 717 to 734 (TSMATSSSSSLSPSAAST) shows a compositional bias: low complexity. A disordered region spans residues 717 to 739 (TSMATSSSSSLSPSAASTPNGGA).

It belongs to the nuclear hormone receptor family. NR1 subfamily.

It is found in the nucleus. Its function is as follows. Receptor for ecdysone. Binds to ecdysone response elements (ECRES). The protein is Ecdysone receptor (EcR) of Lucilia cuprina (Green bottle fly).